Consider the following 540-residue polypeptide: NADH-quinone oxidoreductase subunit N 1 (540 aa).

Helical transmembrane passes span 11 to 31, 52 to 72, 109 to 129, 142 to 162, 195 to 215, 250 to 270, 284 to 306, 324 to 344, 352 to 372, 386 to 406, 431 to 451, 464 to 486, and 508 to 528; these read ILPELMLLLLGLLVLGSDVLT, AVGLGLVFIVGLVQSRFLFTV, FTMIARLTFIGAAFLTTLLAM, ALLIFSTLGMSIMAAATEFIL, FLFGSLSSAIFLYGISLTYGF, LILGMLFIIAGLGYKISVVPF, PVTAFLSTASKAAGFLLLYRLLT, WTSILAILALVTVIVGNLAAL, LLAYSSIGHAGFLLLAVLLWA, LIYYLIVYSLTNLGSFGVLAV, LMMTILILSLAGIPPLAGFWA, AVPLVTIAVIMTVVSLYYYLRFL, and AAIILSTVLVVLLGLLPNLIW.

It belongs to the complex I subunit 2 family. As to quaternary structure, NDH-1 is composed of 14 different subunits. Subunits NuoA, H, J, K, L, M, N constitute the membrane sector of the complex.

It is found in the cell membrane. It carries out the reaction a quinone + NADH + 5 H(+)(in) = a quinol + NAD(+) + 4 H(+)(out). Functionally, NDH-1 shuttles electrons from NADH, via FMN and iron-sulfur (Fe-S) centers, to quinones in the respiratory chain. The immediate electron acceptor for the enzyme in this species is believed to be ubiquinone. Couples the redox reaction to proton translocation (for every two electrons transferred, four hydrogen ions are translocated across the cytoplasmic membrane), and thus conserves the redox energy in a proton gradient. This chain is NADH-quinone oxidoreductase subunit N 1, found in Roseiflexus castenholzii (strain DSM 13941 / HLO8).